We begin with the raw amino-acid sequence, 145 residues long: Large ribosomal subunit protein uL11 (145 aa).

It belongs to the universal ribosomal protein uL11 family. Part of the ribosomal stalk of the 50S ribosomal subunit. Interacts with L10 and the large rRNA to form the base of the stalk. L10 forms an elongated spine to which L12 dimers bind in a sequential fashion forming a multimeric L10(L12)X complex. One or more lysine residues are methylated.

Functionally, forms part of the ribosomal stalk which helps the ribosome interact with GTP-bound translation factors. The chain is Large ribosomal subunit protein uL11 from Hydrogenobaculum sp. (strain Y04AAS1).